A 668-amino-acid polypeptide reads, in one-letter code: Cyclin-dependent kinase 11.2 (668 aa).

The segment at 1–265 (MSNYSTNGSR…EQWESMTENE (265 aa)) is disordered. 3 stretches are compositionally biased toward basic and acidic residues: residues 35–73 (KTKE…DHRD), 85–127 (YCRD…DSLR), and 140–163 (LPDD…KTVM). A compositionally biased stretch (acidic residues) spans 164–181 (EVEDVEMSPVEMLDEEEV). Composition is skewed to basic and acidic residues over residues 197-212 (NEPE…DPES) and 245-265 (PDDK…TENE). Residues 304–600 (YVILNVIAEG…ASEALQHDWF (297 aa)) form the Protein kinase domain. ATP is bound by residues 310–318 (IAEGTYGEV) and lysine 333. The active-site Proton acceptor is the aspartate 432.

This sequence belongs to the protein kinase superfamily. CMGC Ser/Thr protein kinase family. CDC2/CDKX subfamily. As to expression, expressed in somatic cells and at varying levels throughout the germline (at protein level). Highly expressed in the germ line of hermaphrodites (at protein level).

The protein localises to the nucleus. The protein resides in the cytoplasm. It carries out the reaction L-seryl-[protein] + ATP = O-phospho-L-seryl-[protein] + ADP + H(+). It catalyses the reaction L-threonyl-[protein] + ATP = O-phospho-L-threonyl-[protein] + ADP + H(+). Probable cyclin-dependent kinase whose activity is most likely regulated by the cyclin cyl-1/Cylin-L. Acts partially redundantly with cdk-11.1 to ensure embryonic viability. In contrast to cdk-11.1, not essential for male and female fertility. The polypeptide is Cyclin-dependent kinase 11.2 (Caenorhabditis elegans).